Here is a 693-residue protein sequence, read N- to C-terminus: Glycine--tRNA ligase beta subunit (693 aa).

The protein belongs to the class-II aminoacyl-tRNA synthetase family. In terms of assembly, tetramer of two alpha and two beta subunits.

The protein resides in the cytoplasm. The enzyme catalyses tRNA(Gly) + glycine + ATP = glycyl-tRNA(Gly) + AMP + diphosphate. This is Glycine--tRNA ligase beta subunit from Natranaerobius thermophilus (strain ATCC BAA-1301 / DSM 18059 / JW/NM-WN-LF).